An 81-amino-acid chain; its full sequence is Sulfur carrier protein TusA (81 aa).

The active-site Cysteine persulfide intermediate is the Cys19.

It belongs to the sulfur carrier protein TusA family. As to quaternary structure, interacts with IscS.

The protein resides in the cytoplasm. It participates in tRNA modification. Its function is as follows. Sulfur carrier protein involved in sulfur trafficking in the cell. Part of a sulfur-relay system required for 2-thiolation during synthesis of 2-thiouridine of the modified wobble base 5-methylaminomethyl-2-thiouridine (mnm(5)s(2)U) in tRNA. Interacts with IscS and stimulates its cysteine desulfurase activity. Accepts an activated sulfur from IscS, which is then transferred to TusD, and thus determines the direction of sulfur flow from IscS to 2-thiouridine formation. Also appears to be involved in sulfur transfer for the biosynthesis of molybdopterin. This Salmonella choleraesuis (strain SC-B67) protein is Sulfur carrier protein TusA.